A 557-amino-acid polypeptide reads, in one-letter code: MVLSDIEIANSVTMEPISKVADQLGIDKEALCLYGKYKAKIDARQLVALKNKPDGKLILVTAISPTPAGEGKTTTSVGLVDALSAIGKKAVIALREPSLGPVFGVKGGAAGGGHAQVVPMEDINLHFTGDFHAIGVANNLLAALIDNHIHHGNSLGIDSRRITWKRVVDMNDRQLRHIVDGLQGKVNGVPREDGYDITVASEIMAILCLSENISDLKAHLEKIIIGYNFQGEPVTAKDLKAGGALAALLKDAIHPNLVQTLEHTPALIHGGPFANIAHGCNSVLATKLALKYGDYAVTEAGFGADLGAEKFIDIKCRMSGLRPAAVVLVATIRALKMHGGVPKADLATENVQAVVDGLPNLDKHLANIQDVYGLPVVVAINKFPLDTDAELQAVYDACDKRGVDVVISDVWANGGAGGRELAEKVVALAEQDNQFRFVYNEDDSIETKLTKIVTKVYGGKGIKLTPTAKRELAELERLGFGNYPICMAKTQYSFSDDAKKLGAPTDFIVTISNLKVSAGAGFIVALTGAIMTMPGLPKVPASETIDIDEEGNITGLF.

66-73 (TPAGEGKT) serves as a coordination point for ATP.

This sequence belongs to the formate--tetrahydrofolate ligase family.

It carries out the reaction (6S)-5,6,7,8-tetrahydrofolate + formate + ATP = (6R)-10-formyltetrahydrofolate + ADP + phosphate. It functions in the pathway one-carbon metabolism; tetrahydrofolate interconversion. This is Formate--tetrahydrofolate ligase 2 from Streptococcus pyogenes serotype M12 (strain MGAS9429).